Consider the following 255-residue polypeptide: Type III pantothenate kinase (255 aa).

Residue 6–13 (DIGNTNIK) participates in ATP binding. Residue 107 to 110 (GADR) coordinates substrate. Asp-109 functions as the Proton acceptor in the catalytic mechanism. Thr-132 is a binding site for ATP. Position 184 (Thr-184) interacts with substrate.

This sequence belongs to the type III pantothenate kinase family. In terms of assembly, homodimer. It depends on NH4(+) as a cofactor. K(+) serves as cofactor.

The protein localises to the cytoplasm. The catalysed reaction is (R)-pantothenate + ATP = (R)-4'-phosphopantothenate + ADP + H(+). The protein operates within cofactor biosynthesis; coenzyme A biosynthesis; CoA from (R)-pantothenate: step 1/5. In terms of biological role, catalyzes the phosphorylation of pantothenate (Pan), the first step in CoA biosynthesis. The chain is Type III pantothenate kinase from Roseiflexus castenholzii (strain DSM 13941 / HLO8).